Consider the following 500-residue polypeptide: Cytochrome P450 71B35 (500 aa).

A helical transmembrane segment spans residues 1-21; that stretch reads MAHIWLLPLIFLVCILLAVFN. Cys439 provides a ligand contact to heme.

It belongs to the cytochrome P450 family. Heme serves as cofactor.

It localises to the membrane. This chain is Cytochrome P450 71B35 (CYP71B35), found in Arabidopsis thaliana (Mouse-ear cress).